Consider the following 205-residue polypeptide: Guanylate kinase (205 aa).

In terms of domain architecture, Guanylate kinase-like spans 17-195; sequence PRLTVLSGPS…VSRELLALML (179 aa). ATP is bound at residue 24 to 31; the sequence is GPSGVGKS.

Belongs to the guanylate kinase family.

The protein resides in the cytoplasm. It catalyses the reaction GMP + ATP = GDP + ADP. In terms of biological role, essential for recycling GMP and indirectly, cGMP. The protein is Guanylate kinase of Streptomyces kasugaensis.